A 307-amino-acid chain; its full sequence is Glycerol-3-phosphate dehydrogenase [NAD(P)+] (307 aa).

Phe-11, Arg-31, and Lys-95 together coordinate NADPH. Sn-glycerol 3-phosphate is bound by residues Lys-95, Gly-121, and Ser-123. Residue Ala-125 coordinates NADPH. Lys-176, Asp-229, Ser-239, Arg-240, and Asn-241 together coordinate sn-glycerol 3-phosphate. Residue Lys-176 is the Proton acceptor of the active site. Arg-240 contacts NADPH. Residue Glu-261 coordinates NADPH.

Belongs to the NAD-dependent glycerol-3-phosphate dehydrogenase family.

It is found in the cytoplasm. It carries out the reaction sn-glycerol 3-phosphate + NAD(+) = dihydroxyacetone phosphate + NADH + H(+). It catalyses the reaction sn-glycerol 3-phosphate + NADP(+) = dihydroxyacetone phosphate + NADPH + H(+). Its pathway is membrane lipid metabolism; glycerophospholipid metabolism. In terms of biological role, catalyzes the reduction of the glycolytic intermediate dihydroxyacetone phosphate (DHAP) to sn-glycerol 3-phosphate (G3P), the key precursor for phospholipid synthesis. This Jannaschia sp. (strain CCS1) protein is Glycerol-3-phosphate dehydrogenase [NAD(P)+].